A 237-amino-acid polypeptide reads, in one-letter code: Demethylmenaquinone methyltransferase (237 aa).

Residues Thr-58, Asp-79, and 107-108 (NA) each bind S-adenosyl-L-methionine.

The protein belongs to the class I-like SAM-binding methyltransferase superfamily. MenG/UbiE family.

It catalyses the reaction a 2-demethylmenaquinol + S-adenosyl-L-methionine = a menaquinol + S-adenosyl-L-homocysteine + H(+). Its pathway is quinol/quinone metabolism; menaquinone biosynthesis; menaquinol from 1,4-dihydroxy-2-naphthoate: step 2/2. In terms of biological role, methyltransferase required for the conversion of demethylmenaquinol (DMKH2) to menaquinol (MKH2). The sequence is that of Demethylmenaquinone methyltransferase from Lactiplantibacillus plantarum (strain ATCC BAA-793 / NCIMB 8826 / WCFS1) (Lactobacillus plantarum).